Reading from the N-terminus, the 382-residue chain is Serine protease 43 (382 aa).

A signal peptide spans 1–27 (MGGFCGADRGGFLALLVWLQLLQPLFS). A disordered region spans residues 30–97 (YKPREDSGVM…SGTTTKITLE (68 aa)). Polar residues-rich tracts occupy residues 56 to 68 (AQQS…SISH) and 85 to 95 (GSPSGTTTKIT). One can recognise a Peptidase S1 domain in the interval 119-355 (VDPGSLSAGR…YNEWVSYVLS (237 aa)). An intrachain disulfide couples Cys144 to Cys160. Catalysis depends on charge relay system residues His159 and Asp205. 3 disulfide bridges follow: Cys239–Cys313, Cys272–Cys293, and Cys303–Cys331. The active-site Charge relay system is the Ser307. A helical membrane pass occupies residues 362–382 (PMGVLVLYLSLVFPLALLVAL).

It belongs to the peptidase S1 family. In terms of tissue distribution, testis-specific. Expressed in germ cells at the stages from late pachytene spermatocytes to spermatids.

It is found in the cell membrane. Its function is as follows. Plays a role in spermatogenesis. Involved in germ cell survival during meiosis. Lacks protease activity in vitro. The protein is Serine protease 43 of Mus musculus (Mouse).